A 136-amino-acid chain; its full sequence is Nucleoside diphosphate kinase (136 aa).

Positions 10, 58, 86, 92, 104, and 114 each coordinate ATP. The active-site Pros-phosphohistidine intermediate is His117.

The protein belongs to the NDK family. In terms of assembly, homotetramer. Mg(2+) is required as a cofactor.

It localises to the cytoplasm. It catalyses the reaction a 2'-deoxyribonucleoside 5'-diphosphate + ATP = a 2'-deoxyribonucleoside 5'-triphosphate + ADP. It carries out the reaction a ribonucleoside 5'-diphosphate + ATP = a ribonucleoside 5'-triphosphate + ADP. Its function is as follows. Major role in the synthesis of nucleoside triphosphates other than ATP. The ATP gamma phosphate is transferred to the NDP beta phosphate via a ping-pong mechanism, using a phosphorylated active-site intermediate. This is Nucleoside diphosphate kinase from Corynebacterium glutamicum (strain R).